A 57-amino-acid chain; its full sequence is Peptide BmKa1 (57 aa).

Residues 1–22 (MKPRVFFLLFLLVAAMIETGES) form the signal peptide. Composition is skewed to acidic residues over residues 20-29 (GESEENEEGS) and 45-57 (VDNE…GDSD). The disordered stretch occupies residues 20-57 (GESEENEEGSNESGKSTEAKNTDASVDNEDSDIDGDSD).

It belongs to the non-disulfide-bridged peptide (NDBP) superfamily. Expressed by the venom gland.

The protein resides in the secreted. The polypeptide is Peptide BmKa1 (Olivierus martensii (Manchurian scorpion)).